The following is a 938-amino-acid chain: Isoleucine--tRNA ligase (938 aa).

The 'HIGH' region signature appears at 58–68 (PYANGSIHIGH). The residue at position 183 (Lys-183) is an N6-acetyllysine. Glu-561 is a binding site for L-isoleucyl-5'-AMP. A 'KMSKS' region motif is present at residues 602–606 (KMSKS). ATP is bound at residue Lys-605. Residues Cys-901, Cys-904, Cys-921, and Cys-924 each coordinate Zn(2+).

This sequence belongs to the class-I aminoacyl-tRNA synthetase family. IleS type 1 subfamily. In terms of assembly, monomer. It depends on Zn(2+) as a cofactor.

The protein localises to the cytoplasm. The enzyme catalyses tRNA(Ile) + L-isoleucine + ATP = L-isoleucyl-tRNA(Ile) + AMP + diphosphate. Functionally, catalyzes the attachment of isoleucine to tRNA(Ile). As IleRS can inadvertently accommodate and process structurally similar amino acids such as valine, to avoid such errors it has two additional distinct tRNA(Ile)-dependent editing activities. One activity is designated as 'pretransfer' editing and involves the hydrolysis of activated Val-AMP. The other activity is designated 'posttransfer' editing and involves deacylation of mischarged Val-tRNA(Ile). In Escherichia coli O45:K1 (strain S88 / ExPEC), this protein is Isoleucine--tRNA ligase.